Here is a 305-residue protein sequence, read N- to C-terminus: Pseudouridine-5'-phosphate glycosidase (305 aa).

The active-site Proton donor is the Glu-30. Substrate is bound by residues Lys-91 and Val-111. Asp-143 is a Mn(2+) binding site. 145-147 is a binding site for substrate; that stretch reads SAD. Residue Lys-164 is the Nucleophile of the active site.

The protein belongs to the pseudouridine-5'-phosphate glycosidase family. In terms of assembly, homotrimer. Mn(2+) serves as cofactor.

The enzyme catalyses D-ribose 5-phosphate + uracil = psi-UMP + H2O. In terms of biological role, catalyzes the reversible cleavage of pseudouridine 5'-phosphate (PsiMP) to ribose 5-phosphate and uracil. Functions biologically in the cleavage direction, as part of a pseudouridine degradation pathway. The polypeptide is Pseudouridine-5'-phosphate glycosidase (Mesorhizobium japonicum (strain LMG 29417 / CECT 9101 / MAFF 303099) (Mesorhizobium loti (strain MAFF 303099))).